A 51-amino-acid polypeptide reads, in one-letter code: Lipid-anchored plasma membrane protein CPP3 (51 aa).

Residues Met-1 to Gly-28 are disordered.

The protein belongs to the CYSTM1 family. Post-translationally, palmitoylated near the C-terminus.

It localises to the cell membrane. The polypeptide is Lipid-anchored plasma membrane protein CPP3 (Saccharomyces cerevisiae (strain ATCC 204508 / S288c) (Baker's yeast)).